The primary structure comprises 367 residues: Polygalacturonase (367 aa).

The first 18 residues, 1-18 (MRTSFVTMLALGAAAVSA), serve as a signal peptide directing secretion. Cysteines 34 and 49 form a disulfide. PbH1 repeat units follow at residues 161–191 (ADRL…DVGS), 192–213 (STFI…AINS), 214–234 (GSNI…SIGS), 243–264 (VKDV…RVKT), and 272–294 (VSGV…VIEQ). The active-site Proton donor is the Asp206. A disulfide bond links Cys208 and Cys224. His228 is a catalytic residue. N-linked (GlcNAc...) asparagine glycans are attached at residues Asn318 and Asn336. Intrachain disulfides connect Cys334–Cys339 and Cys358–Cys367.

Belongs to the glycosyl hydrolase 28 family.

The protein localises to the secreted. It catalyses the reaction (1,4-alpha-D-galacturonosyl)n+m + H2O = (1,4-alpha-D-galacturonosyl)n + (1,4-alpha-D-galacturonosyl)m.. This chain is Polygalacturonase (PG1), found in Penicillium digitatum (Green mold).